Here is a 184-residue protein sequence, read N- to C-terminus: dCTP deaminase (184 aa).

Residues 107–112, 131–133, Gln152, Tyr166, and Gln176 contribute to the dCTP site; these read KSTYAR and TLE. The active-site Proton donor/acceptor is Glu133.

The protein belongs to the dCTP deaminase family. In terms of assembly, homotrimer.

It carries out the reaction dCTP + H2O + H(+) = dUTP + NH4(+). Its pathway is pyrimidine metabolism; dUMP biosynthesis; dUMP from dCTP (dUTP route): step 1/2. Catalyzes the deamination of dCTP to dUTP. The protein is dCTP deaminase of Erythrobacter litoralis (strain HTCC2594).